Reading from the N-terminus, the 474-residue chain is tRNA-2-methylthio-N(6)-dimethylallyladenosine synthase (474 aa).

The MTTase N-terminal domain occupies Lys-3–Gly-120. [4Fe-4S] cluster contacts are provided by Cys-12, Cys-49, Cys-83, Cys-157, Cys-161, and Cys-164. The Radical SAM core domain maps to Arg-143–Ala-375. Positions Arg-378–Arg-441 constitute a TRAM domain.

It belongs to the methylthiotransferase family. MiaB subfamily. As to quaternary structure, monomer. It depends on [4Fe-4S] cluster as a cofactor.

The protein localises to the cytoplasm. The enzyme catalyses N(6)-dimethylallyladenosine(37) in tRNA + (sulfur carrier)-SH + AH2 + 2 S-adenosyl-L-methionine = 2-methylsulfanyl-N(6)-dimethylallyladenosine(37) in tRNA + (sulfur carrier)-H + 5'-deoxyadenosine + L-methionine + A + S-adenosyl-L-homocysteine + 2 H(+). Catalyzes the methylthiolation of N6-(dimethylallyl)adenosine (i(6)A), leading to the formation of 2-methylthio-N6-(dimethylallyl)adenosine (ms(2)i(6)A) at position 37 in tRNAs that read codons beginning with uridine. The sequence is that of tRNA-2-methylthio-N(6)-dimethylallyladenosine synthase from Shigella boydii serotype 4 (strain Sb227).